Reading from the N-terminus, the 275-residue chain is Large ribosomal subunit protein uL2 (275 aa).

Residues 36–49 (TQSSTAGRNNNGRI) are compositionally biased toward polar residues. 2 disordered regions span residues 36 to 59 (TQSS…GGHK) and 224 to 275 (AMNP…RHKR). Over residues 50–59 (TTRHKGGGHK) the composition is skewed to basic residues.

Belongs to the universal ribosomal protein uL2 family. As to quaternary structure, part of the 50S ribosomal subunit. Forms a bridge to the 30S subunit in the 70S ribosome.

Its function is as follows. One of the primary rRNA binding proteins. Required for association of the 30S and 50S subunits to form the 70S ribosome, for tRNA binding and peptide bond formation. It has been suggested to have peptidyltransferase activity; this is somewhat controversial. Makes several contacts with the 16S rRNA in the 70S ribosome. The polypeptide is Large ribosomal subunit protein uL2 (Burkholderia vietnamiensis (strain G4 / LMG 22486) (Burkholderia cepacia (strain R1808))).